A 552-amino-acid chain; its full sequence is Non-structural protein NS1 (552 aa).

This sequence belongs to the orbivirus non-structural protein NS1 family.

The chain is Non-structural protein NS1 (Segment-5) from Epizootic hemorrhagic disease virus 2 (strain Alberta) (EHDV-2).